Reading from the N-terminus, the 76-residue chain is MDKVFNVGKLVDFQWKLGVSIASNHSSQLNTPFITVFVKVLDSNSEVTSHSFELTIPEFKNFAQQFKDMSNMIETL.

One can recognise a COMM domain in the interval 9–76; the sequence is KLVDFQWKLG…KDMSNMIETL (68 aa).

This sequence belongs to the COMM domain-containing protein 6 family. Component of the commander complex consisting of the CCC subcomplex and the retriever subcomplex. Component of the CCC subcomplex.

In terms of biological role, scaffold protein in the commander complex that is essential for endosomal recycling of transmembrane cargos; the commander complex is composed of the CCC subcomplex and the retriever subcomplex. The sequence is that of COMM domain-containing protein 6 (commd6) from Dictyostelium discoideum (Social amoeba).